We begin with the raw amino-acid sequence, 349 residues long: MASDDRPLALTLGDPSGIGPEIALAAWRLRGERGVPPFQLIGDPEFLEATAYRLGLSVPVAEVEPDDAVEVFARALPVLPLPSGAKVSATPGAPDSANAGAIVESITAAVDLVRSGAASAVVTNPIAKFVLTRVGFAHPGHTEFLAALAAREGREPPLPVMMLWSELLAVVPVTIHVALRRVPDLLTQELVERTARIVHADLRARFGLEAPRLVLSGLNPHAGESGTMGTEDRDVLAPAVAALRAEGIDIRGPLPADTLFHERARATYDVALAPTHDQALIPIKTLAFDEGVNVTLGLPFVRTSPDHGTAFDIAGKGVAKPDSLIAALRLAQRLAQRPANNVTPFPVRA.

Substrate is bound by residues His-141 and Thr-142. A divalent metal cation contacts are provided by His-176, His-221, and His-276. Substrate contacts are provided by Lys-284, Asn-293, and Arg-302.

This sequence belongs to the PdxA family. In terms of assembly, homodimer. The cofactor is Zn(2+). Mg(2+) serves as cofactor. Requires Co(2+) as cofactor.

The protein resides in the cytoplasm. It catalyses the reaction 4-(phosphooxy)-L-threonine + NAD(+) = 3-amino-2-oxopropyl phosphate + CO2 + NADH. It functions in the pathway cofactor biosynthesis; pyridoxine 5'-phosphate biosynthesis; pyridoxine 5'-phosphate from D-erythrose 4-phosphate: step 4/5. Catalyzes the NAD(P)-dependent oxidation of 4-(phosphooxy)-L-threonine (HTP) into 2-amino-3-oxo-4-(phosphooxy)butyric acid which spontaneously decarboxylates to form 3-amino-2-oxopropyl phosphate (AHAP). This Methylorubrum populi (strain ATCC BAA-705 / NCIMB 13946 / BJ001) (Methylobacterium populi) protein is 4-hydroxythreonine-4-phosphate dehydrogenase.